Consider the following 233-residue polypeptide: Large ribosomal subunit protein uL1 (233 aa).

Belongs to the universal ribosomal protein uL1 family. As to quaternary structure, part of the 50S ribosomal subunit.

Its function is as follows. Binds directly to 23S rRNA. The L1 stalk is quite mobile in the ribosome, and is involved in E site tRNA release. In terms of biological role, protein L1 is also a translational repressor protein, it controls the translation of the L11 operon by binding to its mRNA. This is Large ribosomal subunit protein uL1 from Vibrio parahaemolyticus serotype O3:K6 (strain RIMD 2210633).